A 728-amino-acid chain; its full sequence is Hepatocyte growth factor (728 aa).

The first 32 residues, 1–32, serve as a signal peptide directing secretion; sequence MMWGTKLLPVLLLQHVLLHLLLLPVTIPYAEG. Position 33 is a pyrrolidone carboxylic acid (glutamine 33). The 87-residue stretch at 38-124 folds into the PAN domain; sequence NTLHEFKKSA…HEFDLYENKD (87 aa). Intrachain disulfides connect cysteine 71–cysteine 97, cysteine 75–cysteine 85, cysteine 129–cysteine 207, cysteine 150–cysteine 190, cysteine 178–cysteine 202, cysteine 212–cysteine 289, cysteine 233–cysteine 272, and cysteine 261–cysteine 284. 2 consecutive Kringle domains span residues 129 to 207 and 212 to 289; these read CIIG…IPQC and CMTC…IKMC. Asparagine 295 carries an N-linked (GlcNAc...) asparagine glycan. 11 disulfide bridges follow: cysteine 306–cysteine 384, cysteine 327–cysteine 366, cysteine 355–cysteine 378, cysteine 392–cysteine 470, cysteine 413–cysteine 453, cysteine 441–cysteine 465, cysteine 488–cysteine 607, cysteine 520–cysteine 536, cysteine 615–cysteine 682, cysteine 645–cysteine 661, and cysteine 672–cysteine 700. 2 consecutive Kringle domains span residues 306–384 and 392–470; these read CIKG…IPKC and CYRG…ISRC. The N-linked (GlcNAc...) asparagine glycan is linked to asparagine 403. In terms of domain architecture, Peptidase S1 spans 496-724; the sequence is VVNGIPTQTT…YAKWIHKVIL (229 aa). N-linked (GlcNAc...) asparagine glycans are attached at residues asparagine 569 and asparagine 656.

The protein belongs to the peptidase S1 family. Plasminogen subfamily. As to quaternary structure, dimer of an alpha chain and a beta chain linked by a disulfide bond. Interacts with SRPX2; the interaction increases HGF mitogenic activity. The single-chain precursor undergoes proteolytic processing by TMPRSS13 resulting in an active two-chain form. The single-chain precursor undergoes proteolytic processing by HGFAC resulting in an active two-chain form.

In terms of biological role, potent mitogen for mature parenchymal hepatocyte cells, seems to be a hepatotrophic factor, and acts as a growth factor for a broad spectrum of tissues and cell types. Activating ligand for the receptor tyrosine kinase MET by binding to it and promoting its dimerization. Activates MAPK signaling following TMPRSS13 cleavage and activation. This is Hepatocyte growth factor (Hgf) from Rattus norvegicus (Rat).